Consider the following 363-residue polypeptide: UDP-N-acetylglucosamine--N-acetylmuramyl-(pentapeptide) pyrophosphoryl-undecaprenol N-acetylglucosamine transferase (363 aa).

Residues 12-14, Asn122, Arg164, Ser191, Ile245, and Gln290 each bind UDP-N-acetyl-alpha-D-glucosamine; that span reads TGG.

It belongs to the glycosyltransferase 28 family. MurG subfamily.

The protein resides in the cell membrane. The enzyme catalyses di-trans,octa-cis-undecaprenyl diphospho-N-acetyl-alpha-D-muramoyl-L-alanyl-D-glutamyl-meso-2,6-diaminopimeloyl-D-alanyl-D-alanine + UDP-N-acetyl-alpha-D-glucosamine = di-trans,octa-cis-undecaprenyl diphospho-[N-acetyl-alpha-D-glucosaminyl-(1-&gt;4)]-N-acetyl-alpha-D-muramoyl-L-alanyl-D-glutamyl-meso-2,6-diaminopimeloyl-D-alanyl-D-alanine + UDP + H(+). It functions in the pathway cell wall biogenesis; peptidoglycan biosynthesis. Its function is as follows. Cell wall formation. Catalyzes the transfer of a GlcNAc subunit on undecaprenyl-pyrophosphoryl-MurNAc-pentapeptide (lipid intermediate I) to form undecaprenyl-pyrophosphoryl-MurNAc-(pentapeptide)GlcNAc (lipid intermediate II). The sequence is that of UDP-N-acetylglucosamine--N-acetylmuramyl-(pentapeptide) pyrophosphoryl-undecaprenol N-acetylglucosamine transferase from Lawsonia intracellularis (strain PHE/MN1-00).